Reading from the N-terminus, the 305-residue chain is MTAVLPLPHPLADPAPRDPRQRLQREQLRLGKRLQRQVGQAIADFGMISPGDKIMVCLSGGKDSYTMLDMLLQLQRKAPVPFTLVAVNLDQKQPDFPAHVLPAYLDALGVPFDIVEQDTYSVVSRVVPAGKTMCSLCSRLRRGALYAYAQTHGVTKIALGHHRDDIVATFFMNLFHHARLAAMAPKLRSDDGAHVVIRPLAYVREAHIAAYAQARQFPIIPCNLCGSQENLQRQQVGKMLQQWDHEQPGRVEQIARALGDVRPEQLADRTLFDFLALGRSGDAPPDLAPDPGAWLTASDATHDSD.

The interval 1 to 20 (MTAVLPLPHPLADPAPRDPR) is disordered. A PP-loop motif motif is present at residues 59–64 (SGGKDS). Positions 134, 137, and 225 each coordinate [4Fe-4S] cluster. Positions 282–293 (DAPPDLAPDPGA) are enriched in low complexity. The tract at residues 282 to 305 (DAPPDLAPDPGAWLTASDATHDSD) is disordered.

It belongs to the TtcA family. In terms of assembly, homodimer. The cofactor is Mg(2+). [4Fe-4S] cluster is required as a cofactor.

Its subcellular location is the cytoplasm. The catalysed reaction is cytidine(32) in tRNA + S-sulfanyl-L-cysteinyl-[cysteine desulfurase] + AH2 + ATP = 2-thiocytidine(32) in tRNA + L-cysteinyl-[cysteine desulfurase] + A + AMP + diphosphate + H(+). The protein operates within tRNA modification. Catalyzes the ATP-dependent 2-thiolation of cytidine in position 32 of tRNA, to form 2-thiocytidine (s(2)C32). The sulfur atoms are provided by the cysteine/cysteine desulfurase (IscS) system. The polypeptide is tRNA-cytidine(32) 2-sulfurtransferase (Xanthomonas oryzae pv. oryzae (strain PXO99A)).